A 104-amino-acid polypeptide reads, in one-letter code: Putative arsenate reductase (104 aa).

The active site involves C12.

It belongs to the ArsC family.

It carries out the reaction [glutaredoxin]-dithiol + arsenate + glutathione + H(+) = glutathionyl-S-S-[glutaredoxin] + arsenite + H2O. In terms of biological role, reduction of arsenate [As(V)] to arsenite [As(III)]. This protein expands the substrate specificity of ArsAB pump which can extrude arsenite and antimonite to allow for arsenate pumping and resistance. This is Putative arsenate reductase (yfjU) from Escherichia coli (strain K12).